Reading from the N-terminus, the 390-residue chain is Alcohol dehydrogenase-like 7 (390 aa).

8 residues coordinate Zn(2+): Cys-56, Ser-58, His-78, Cys-108, Cys-111, Cys-114, Cys-122, and Cys-187. Positions 58 and 78 each coordinate an alcohol. Ser-58 is an NAD(+) binding site. Residues 212-217, Asp-236, Lys-241, 306-308, Phe-334, and Arg-384 contribute to the NAD(+) site; these read GLGSIG and LGV.

Belongs to the zinc-containing alcohol dehydrogenase family. Class-III subfamily. Homodimer. It depends on Zn(2+) as a cofactor.

It localises to the cytoplasm. It carries out the reaction a primary alcohol + NAD(+) = an aldehyde + NADH + H(+). The catalysed reaction is a secondary alcohol + NAD(+) = a ketone + NADH + H(+). The sequence is that of Alcohol dehydrogenase-like 7 from Arabidopsis thaliana (Mouse-ear cress).